The following is a 335-amino-acid chain: 3-dehydroquinate synthase (335 aa).

Residues 56–61 (DGEKYK), 90–94 (GVITD), 114–115 (TT), lysine 127, lysine 135, and 153–156 (FLKT) each bind NAD(+). Residues glutamate 168, histidine 227, and histidine 243 each coordinate Zn(2+).

It belongs to the sugar phosphate cyclases superfamily. Dehydroquinate synthase family. NAD(+) serves as cofactor. Co(2+) is required as a cofactor. The cofactor is Zn(2+).

It is found in the cytoplasm. The catalysed reaction is 7-phospho-2-dehydro-3-deoxy-D-arabino-heptonate = 3-dehydroquinate + phosphate. It participates in metabolic intermediate biosynthesis; chorismate biosynthesis; chorismate from D-erythrose 4-phosphate and phosphoenolpyruvate: step 2/7. Functionally, catalyzes the conversion of 3-deoxy-D-arabino-heptulosonate 7-phosphate (DAHP) to dehydroquinate (DHQ). The sequence is that of 3-dehydroquinate synthase from Pyrococcus furiosus (strain ATCC 43587 / DSM 3638 / JCM 8422 / Vc1).